We begin with the raw amino-acid sequence, 283 residues long: Daunorubicin resistance ABC transporter permease protein DrrB1 (283 aa).

The ABC transmembrane type-2 domain occupies 53–280 (VQLIDIVLMP…PLTMRLYRNK (228 aa)). 6 helical membrane-spanning segments follow: residues 58–78 (IVLM…GAFA), 85–105 (LQFY…VYTG), 150–170 (VFLG…VVGA), 171–191 (MLVL…LGVV), 198–218 (VSGT…IFVM), and 252–272 (FWDV…FAPL).

The protein belongs to the ABC-2 integral membrane protein family. The complex is probably composed of two ATP-binding proteins (DrrA1) and two transmembrane proteins (DrrB1).

Its subcellular location is the cell membrane. Its function is as follows. Part of the ABC transporter complex DrrA1B1 involved in daunorubicin efflux. Responsible for the translocation of the substrate across the membrane. Confers self-resistance to daunorubicin, an antibiotic produced by S.coeruleorubidus. The protein is Daunorubicin resistance ABC transporter permease protein DrrB1 of Streptomyces coeruleorubidus.